The sequence spans 200 residues: Pyridoxal 5'-phosphate synthase subunit PdxT (200 aa).

An L-glutamine-binding site is contributed by Gly52 to Ser54. The Nucleophile role is filled by Cys84. L-glutamine contacts are provided by residues Arg116 and Ile145–Arg146. Catalysis depends on charge relay system residues His181 and Glu183.

This sequence belongs to the glutaminase PdxT/SNO family. In terms of assembly, in the presence of PdxS, forms a dodecamer of heterodimers. Only shows activity in the heterodimer.

It carries out the reaction aldehydo-D-ribose 5-phosphate + D-glyceraldehyde 3-phosphate + L-glutamine = pyridoxal 5'-phosphate + L-glutamate + phosphate + 3 H2O + H(+). The catalysed reaction is L-glutamine + H2O = L-glutamate + NH4(+). The protein operates within cofactor biosynthesis; pyridoxal 5'-phosphate biosynthesis. Its function is as follows. Catalyzes the hydrolysis of glutamine to glutamate and ammonia as part of the biosynthesis of pyridoxal 5'-phosphate. The resulting ammonia molecule is channeled to the active site of PdxS. This Sulfolobus acidocaldarius (strain ATCC 33909 / DSM 639 / JCM 8929 / NBRC 15157 / NCIMB 11770) protein is Pyridoxal 5'-phosphate synthase subunit PdxT.